A 152-amino-acid polypeptide reads, in one-letter code: Arginine repressor (152 aa).

Belongs to the ArgR family.

Its subcellular location is the cytoplasm. Its pathway is amino-acid biosynthesis; L-arginine biosynthesis [regulation]. Its function is as follows. Regulates arginine biosynthesis genes. The protein is Arginine repressor of Caldicellulosiruptor bescii (strain ATCC BAA-1888 / DSM 6725 / KCTC 15123 / Z-1320) (Anaerocellum thermophilum).